Consider the following 238-residue polypeptide: MVNTRDFLPKTTHYLKVPIIGLNAILWLLGLVLIVVGSVCISFFSNFKEFTKESGYKNALSNLTTSAPTGVLVIGIFFILLTLVGCFVAYKEKLVGLVLYTMLMLILLVVLIGIGGKALTLDKEDAVSIIGTSWVQISNSLKNSTITKLEDFLECCCWSESYSNQTYKDLCPKDDDGNIKYEDTYCEGIFTKQVSSKLVLVGIAGVVIGCIEFVAMALSLFLIIRICRSPRSRAYDQY.

At 1–16 (MVNTRDFLPKTTHYLK) the chain is on the cytoplasmic side. The helical transmembrane segment at 17 to 37 (VPIIGLNAILWLLGLVLIVVG) threads the bilayer. The Extracellular portion of the chain corresponds to 38 to 69 (SVCISFFSNFKEFTKESGYKNALSNLTTSAPT). N-linked (GlcNAc...) asparagine glycosylation is present at N62. A helical transmembrane segment spans residues 70-90 (GVLVIGIFFILLTLVGCFVAY). The Cytoplasmic segment spans residues 91-93 (KEK). A helical membrane pass occupies residues 94-114 (LVGLVLYTMLMLILLVVLIGI). Residues 115–197 (GGKALTLDKE…GIFTKQVSSK (83 aa)) are Extracellular-facing. N-linked (GlcNAc...) asparagine glycans are attached at residues N143 and N164. A helical membrane pass occupies residues 198–218 (LVLVGIAGVVIGCIEFVAMAL). Topologically, residues 219–238 (SLFLIIRICRSPRSRAYDQY) are cytoplasmic.

It belongs to the tetraspanin (TM4SF) family.

It localises to the membrane. In Dictyostelium discoideum (Social amoeba), this protein is Probable tetraspanin tspC (tspC).